The following is a 444-amino-acid chain: Signal recognition particle 54 kDa protein (444 aa).

Residues 104–111 (GLQGSGKT), 184–188 (DTAGR), and 242–245 (TKLD) contribute to the GTP site.

The protein belongs to the GTP-binding SRP family. SRP54 subfamily. Part of the signal recognition particle protein translocation system, which is composed of SRP and FtsY. Archaeal SRP consists of a 7S RNA molecule of 300 nucleotides and two protein subunits: SRP54 and SRP19.

The protein resides in the cytoplasm. The enzyme catalyses GTP + H2O = GDP + phosphate + H(+). Functionally, involved in targeting and insertion of nascent membrane proteins into the cytoplasmic membrane. Binds to the hydrophobic signal sequence of the ribosome-nascent chain (RNC) as it emerges from the ribosomes. The SRP-RNC complex is then targeted to the cytoplasmic membrane where it interacts with the SRP receptor FtsY. The sequence is that of Signal recognition particle 54 kDa protein from Methanothrix thermoacetophila (strain DSM 6194 / JCM 14653 / NBRC 101360 / PT) (Methanosaeta thermophila).